The following is a 491-amino-acid chain: Malonate-semialdehyde dehydrogenase 1 (491 aa).

NAD(+) is bound by residues Ala154, Phe156, Lys180, Glu183, Arg184, Ser233, and Thr255. Cys288 acts as the Nucleophile in catalysis. Glu386 is an NAD(+) binding site.

The protein belongs to the aldehyde dehydrogenase family. IolA subfamily. In terms of assembly, homotetramer.

The catalysed reaction is 3-oxopropanoate + NAD(+) + CoA + H2O = hydrogencarbonate + acetyl-CoA + NADH + H(+). It catalyses the reaction 2-methyl-3-oxopropanoate + NAD(+) + CoA + H2O = propanoyl-CoA + hydrogencarbonate + NADH + H(+). It functions in the pathway polyol metabolism; myo-inositol degradation into acetyl-CoA; acetyl-CoA from myo-inositol: step 7/7. Catalyzes the oxidation of malonate semialdehyde (MSA) and methylmalonate semialdehyde (MMSA) into acetyl-CoA and propanoyl-CoA, respectively. Is involved in a myo-inositol catabolic pathway. Bicarbonate, and not CO2, is the end-product of the enzymatic reaction. This Shouchella clausii (strain KSM-K16) (Alkalihalobacillus clausii) protein is Malonate-semialdehyde dehydrogenase 1.